A 310-amino-acid polypeptide reads, in one-letter code: Oxygen-dependent coproporphyrinogen-III oxidase (310 aa).

Residue serine 97 participates in substrate binding. Residues histidine 101 and histidine 111 each coordinate a divalent metal cation. Catalysis depends on histidine 111, which acts as the Proton donor. 113 to 115 (NFR) contacts substrate. A divalent metal cation is bound by residues histidine 150 and histidine 180. The important for dimerization stretch occupies residues 245–280 (YVEFNLLYDRGTRFGLEFGGRTESILMSLPPRVVWR). Residue 263-265 (GGR) coordinates substrate.

It belongs to the aerobic coproporphyrinogen-III oxidase family. Homodimer. A divalent metal cation serves as cofactor.

The protein localises to the cytoplasm. It catalyses the reaction coproporphyrinogen III + O2 + 2 H(+) = protoporphyrinogen IX + 2 CO2 + 2 H2O. It participates in porphyrin-containing compound metabolism; protoporphyrin-IX biosynthesis; protoporphyrinogen-IX from coproporphyrinogen-III (O2 route): step 1/1. Its function is as follows. Involved in the heme biosynthesis. Catalyzes the aerobic oxidative decarboxylation of propionate groups of rings A and B of coproporphyrinogen-III to yield the vinyl groups in protoporphyrinogen-IX. This Coxiella burnetii (strain RSA 493 / Nine Mile phase I) protein is Oxygen-dependent coproporphyrinogen-III oxidase.